The chain runs to 493 residues: Tripartite motif-containing protein 5 (493 aa).

Residue Ala-2 is modified to N-acetylalanine. The segment at Cys-15–Arg-59 adopts an RING-type zinc-finger fold. Ser-86 is subject to Phosphoserine. The segment at Gln-90–Glu-132 adopts a B box-type zinc-finger fold. Residues Cys-95, His-98, Cys-117, and His-123 each contribute to the Zn(2+) site. Residues Thr-131–Gln-240 are a coiled coil. The interval Phe-185–Asn-198 is required for interaction with GABARAP and for autophagy. One can recognise a B30.2/SPRY domain in the interval Leu-281–Ser-493.

Belongs to the TRIM/RBCC family. As to quaternary structure, can form homodimers and homotrimers. In addition to lower-order dimerization, also exhibits a higher-order multimerization and both low- and high-order multimerizations are essential for its restriction activity. Interacts with BTBD1 and BTBD2. Interacts with PSMC4, PSMC5, PSMD7 and HSPA8/HSC70. Interacts (via B30.2/SPRY domain) with HSPA1A/B. Interacts with PSMC2, MAP3K7/TAK1, TAB2 and TAB3. Interacts with SQSTM1. Interacts with TRIM6 and TRIM34. Interacts with ULK1 (phosphorylated form), GABARAP, GABARAPL1, GABARAPL2, MAP1LC3A, MAP1LC3C and BECN1. Degraded in a proteasome-independent fashion in the absence of viral infection but in a proteasome-dependent fashion following exposure to restriction sensitive virus. Post-translationally, autoubiquitinated in a RING finger- and UBE2D2-dependent manner. Monoubiquitinated by TRIM21. Deubiquitinated by Yersinia YopJ. Ubiquitination may not lead to proteasomal degradation.

It is found in the cytoplasm. The protein localises to the nucleus. It carries out the reaction S-ubiquitinyl-[E2 ubiquitin-conjugating enzyme]-L-cysteine + [acceptor protein]-L-lysine = [E2 ubiquitin-conjugating enzyme]-L-cysteine + N(6)-ubiquitinyl-[acceptor protein]-L-lysine.. Its pathway is protein modification; protein ubiquitination. Its function is as follows. Capsid-specific restriction factor that prevents infection from non-host-adapted retroviruses. Blocks viral replication early in the life cycle, after viral entry but before reverse transcription. In addition to acting as a capsid-specific restriction factor, also acts as a pattern recognition receptor that activates innate immune signaling in response to the retroviral capsid lattice. Binding to the viral capsid triggers its E3 ubiquitin ligase activity, and in concert with the heterodimeric ubiquitin conjugating enzyme complex UBE2V1-UBE2N (also known as UBC13-UEV1A complex) generates 'Lys-63'-linked polyubiquitin chains, which in turn are catalysts in the autophosphorylation of the MAP3K7/TAK1 complex (includes TAK1, TAB2, and TAB3). Activation of the MAP3K7/TAK1 complex by autophosphorylation results in the induction and expression of NF-kappa-B and MAPK-responsive inflammatory genes, thereby leading to an innate immune response in the infected cell. Plays a role in regulating autophagy through activation of autophagy regulator BECN1 by causing its dissociation from its inhibitors BCL2 and TAB2. This is Tripartite motif-containing protein 5 (TRIM5) from Pan paniscus (Pygmy chimpanzee).